The sequence spans 271 residues: Aquaporin-2 (271 aa).

Residues 1 to 11 (MWELRSIAFSR) are Cytoplasmic-facing. Residues 12-32 (AVLAEFLATLLFVFFGLGSAL) form a helical membrane-spanning segment. The Extracellular portion of the chain corresponds to 33 to 40 (QWASSPPS). The helical transmembrane segment at 41 to 59 (VLQIAVAFGLGIGILVQAL) threads the bilayer. The Cytoplasmic segment spans residues 60-64 (GHVSG). Positions 65-74 (AHINPAVTVA) form an intramembrane region, discontinuously helical. The NPA 1 motif lies at 68–70 (NPA). At 75 to 85 (CLVGCHVSFLR) the chain is on the cytoplasmic side. Residues 86-107 (AAFYVAAQLLGAVAGAAILHEI) traverse the membrane as a helical segment. The Extracellular segment spans residues 108 to 127 (TPVEIRGDLAVNALHNNATA). N-linked (GlcNAc...) asparagine glycosylation occurs at asparagine 124. The chain crosses the membrane as a helical span at residues 128–148 (GQAVTVELFLTMQLVLCIFAS). The Cytoplasmic portion of the chain corresponds to 149 to 156 (TDERRGDN). Residues 157 to 176 (LGSPALSIGFSVTLGHLLGI) traverse the membrane as a helical segment. The Extracellular portion of the chain corresponds to 177–180 (YFTG). The segment at residues 181–193 (CSMNPARSLAPAV) is an intramembrane region (discontinuously helical). The NPA 2 motif lies at 184-186 (NPA). Residues 194–201 (VTGKFDDH) are Extracellular-facing. Residues 202-222 (WVFWIGPLVGAIIGSLLYNYL) traverse the membrane as a helical segment. Over 223–271 (LFPSAKSLQERLAVLKGLEPDTDWEEREVRRRQSVELHSPQSLPRGSKA) the chain is Cytoplasmic. The disordered stretch occupies residues 251–271 (VRRRQSVELHSPQSLPRGSKA). Serine 256, serine 261, serine 264, and serine 269 each carry phosphoserine. The segment covering 261-271 (SPQSLPRGSKA) has biased composition (polar residues).

It belongs to the MIP/aquaporin (TC 1.A.8) family. In terms of assembly, homotetramer. In terms of processing, ser-256 phosphorylation is necessary and sufficient for expression at the apical membrane. Endocytosis is not phosphorylation-dependent. Post-translationally, N-glycosylated. In terms of tissue distribution, detected in kidney, in cortical and the medullary collecting tubules (at protein level). Detected in kidney medulla and cortex.

The protein resides in the apical cell membrane. It is found in the basolateral cell membrane. Its subcellular location is the cell membrane. The protein localises to the cytoplasmic vesicle membrane. It localises to the golgi apparatus. The protein resides in the trans-Golgi network membrane. The enzyme catalyses H2O(in) = H2O(out). It carries out the reaction glycerol(in) = glycerol(out). Its function is as follows. Forms a water-specific channel that provides the plasma membranes of renal collecting duct with high permeability to water, thereby permitting water to move in the direction of an osmotic gradient. Plays an essential role in renal water homeostasis. Could also be permeable to glycerol. In Rattus norvegicus (Rat), this protein is Aquaporin-2.